Consider the following 250-residue polypeptide: Heme oxygenase 2 (250 aa).

Heme b is bound at residue His-16. The segment at 228-250 is disordered; the sequence is QDRPGSTEARSTAGHPITLMVGE.

The protein belongs to the heme oxygenase family. In terms of assembly, homodimer.

The enzyme catalyses heme b + 3 reduced [NADPH--hemoprotein reductase] + 3 O2 = biliverdin IXalpha + CO + Fe(2+) + 3 oxidized [NADPH--hemoprotein reductase] + 3 H2O + H(+). Its function is as follows. Catalyzes the opening of the heme ring with the release of iron. Key enzyme in the synthesis of the chromophoric part of the photosynthetic antennae. The chain is Heme oxygenase 2 (pbsA2) from Synechocystis sp. (strain ATCC 27184 / PCC 6803 / Kazusa).